The chain runs to 167 residues: Crossover junction endodeoxyribonuclease RuvC (167 aa).

Active-site residues include Asp8, Glu68, and Asp140. Asp8, Glu68, and Asp140 together coordinate Mg(2+).

This sequence belongs to the RuvC family. Homodimer which binds Holliday junction (HJ) DNA. The HJ becomes 2-fold symmetrical on binding to RuvC with unstacked arms; it has a different conformation from HJ DNA in complex with RuvA. In the full resolvosome a probable DNA-RuvA(4)-RuvB(12)-RuvC(2) complex forms which resolves the HJ. It depends on Mg(2+) as a cofactor.

The protein localises to the cytoplasm. The catalysed reaction is Endonucleolytic cleavage at a junction such as a reciprocal single-stranded crossover between two homologous DNA duplexes (Holliday junction).. Functionally, the RuvA-RuvB-RuvC complex processes Holliday junction (HJ) DNA during genetic recombination and DNA repair. Endonuclease that resolves HJ intermediates. Cleaves cruciform DNA by making single-stranded nicks across the HJ at symmetrical positions within the homologous arms, yielding a 5'-phosphate and a 3'-hydroxyl group; requires a central core of homology in the junction. The consensus cleavage sequence is 5'-(A/T)TT(C/G)-3'. Cleavage occurs on the 3'-side of the TT dinucleotide at the point of strand exchange. HJ branch migration catalyzed by RuvA-RuvB allows RuvC to scan DNA until it finds its consensus sequence, where it cleaves and resolves the cruciform DNA. This Sinorhizobium medicae (strain WSM419) (Ensifer medicae) protein is Crossover junction endodeoxyribonuclease RuvC.